The sequence spans 413 residues: Gamma-glutamyl phosphate reductase (413 aa).

This sequence belongs to the gamma-glutamyl phosphate reductase family.

It is found in the cytoplasm. It catalyses the reaction L-glutamate 5-semialdehyde + phosphate + NADP(+) = L-glutamyl 5-phosphate + NADPH + H(+). Its pathway is amino-acid biosynthesis; L-proline biosynthesis; L-glutamate 5-semialdehyde from L-glutamate: step 2/2. Catalyzes the NADPH-dependent reduction of L-glutamate 5-phosphate into L-glutamate 5-semialdehyde and phosphate. The product spontaneously undergoes cyclization to form 1-pyrroline-5-carboxylate. In Leuconostoc mesenteroides subsp. mesenteroides (strain ATCC 8293 / DSM 20343 / BCRC 11652 / CCM 1803 / JCM 6124 / NCDO 523 / NBRC 100496 / NCIMB 8023 / NCTC 12954 / NRRL B-1118 / 37Y), this protein is Gamma-glutamyl phosphate reductase.